Here is a 158-residue protein sequence, read N- to C-terminus: Transcription elongation factor GreA (158 aa).

Positions 47 to 68 (AEYDAAKEAQGLLELKIKKMEE) form a coiled coil.

The protein belongs to the GreA/GreB family.

Necessary for efficient RNA polymerase transcription elongation past template-encoded arresting sites. The arresting sites in DNA have the property of trapping a certain fraction of elongating RNA polymerases that pass through, resulting in locked ternary complexes. Cleavage of the nascent transcript by cleavage factors such as GreA or GreB allows the resumption of elongation from the new 3'terminus. GreA releases sequences of 2 to 3 nucleotides. This is Transcription elongation factor GreA from Flavobacterium psychrophilum (strain ATCC 49511 / DSM 21280 / CIP 103535 / JIP02/86).